We begin with the raw amino-acid sequence, 488 residues long: Ribulose bisphosphate carboxylase large chain (488 aa).

Residues Asn127 and Thr177 each coordinate substrate. Lys179 serves as the catalytic Proton acceptor. Position 181 (Lys181) interacts with substrate. Residues Lys205, Asp207, and Glu208 each coordinate Mg(2+). Position 205 is an N6-carboxylysine (Lys205). The active-site Proton acceptor is the His297. Residues Arg298, His330, and Ser382 each contribute to the substrate site.

This sequence belongs to the RuBisCO large chain family. Type I subfamily. As to quaternary structure, heterohexadecamer of 8 large chains and 8 small chains. Requires Mg(2+) as cofactor.

The protein resides in the plastid. It is found in the chloroplast. It catalyses the reaction 2 (2R)-3-phosphoglycerate + 2 H(+) = D-ribulose 1,5-bisphosphate + CO2 + H2O. It carries out the reaction D-ribulose 1,5-bisphosphate + O2 = 2-phosphoglycolate + (2R)-3-phosphoglycerate + 2 H(+). In terms of biological role, ruBisCO catalyzes two reactions: the carboxylation of D-ribulose 1,5-bisphosphate, the primary event in carbon dioxide fixation, as well as the oxidative fragmentation of the pentose substrate in the photorespiration process. Both reactions occur simultaneously and in competition at the same active site. This Gracilaria tenuistipitata var. liui (Red alga) protein is Ribulose bisphosphate carboxylase large chain.